A 106-amino-acid chain; its full sequence is Colipase A (106 aa).

Residues 1–11 form the signal peptide; sequence LLLVALAVAYA. Residues 12–16 constitute a propeptide, enterostatin, activation peptide; the sequence is VPDPR. Disulfide bonds link C28–C39, C34–C50, C38–C72, C60–C80, and C74–C98. W63 is a binding site for taurodeoxycholate.

The protein belongs to the colipase family. In terms of assembly, forms a 1:1 stoichiometric complex with pancreatic lipase. As to expression, expressed by the pancreas.

The protein localises to the secreted. Functionally, colipase is a cofactor of pancreatic lipase. It allows the lipase to anchor itself to the lipid-water interface. Without colipase the enzyme is washed off by bile salts, which have an inhibitory effect on the lipase. Enterostatin has a biological activity as a satiety signal. This Equus caballus (Horse) protein is Colipase A (CLPS1).